Here is a 98-residue protein sequence, read N- to C-terminus: NADH-ubiquinone oxidoreductase chain 4L (98 aa).

3 helical membrane-spanning segments follow: residues 1–21 (MSLT…GLLM), 29–49 (SLLC…ITIL), and 61–81 (IILL…LVMV).

The protein belongs to the complex I subunit 4L family. In terms of assembly, core subunit of respiratory chain NADH dehydrogenase (Complex I) which is composed of 45 different subunits.

The protein localises to the mitochondrion inner membrane. It catalyses the reaction a ubiquinone + NADH + 5 H(+)(in) = a ubiquinol + NAD(+) + 4 H(+)(out). Functionally, core subunit of the mitochondrial membrane respiratory chain NADH dehydrogenase (Complex I) which catalyzes electron transfer from NADH through the respiratory chain, using ubiquinone as an electron acceptor. Part of the enzyme membrane arm which is embedded in the lipid bilayer and involved in proton translocation. In Mystacina tuberculata (New Zealand lesser short-tailed bat), this protein is NADH-ubiquinone oxidoreductase chain 4L (MT-ND4L).